We begin with the raw amino-acid sequence, 429 residues long: Aspartate--tRNA(Asp/Asn) ligase (429 aa).

Glutamate 167 contributes to the L-aspartate binding site. Residues 189-192 (QLYK) form an aspartate region. Arginine 210 provides a ligand contact to L-aspartate. ATP contacts are provided by residues 210–212 (RAE) and glutamate 352. Residues glutamate 352 and serine 355 each contribute to the Mg(2+) site. The L-aspartate site is built by serine 355 and arginine 359. An ATP-binding site is contributed by 400 to 403 (GLAR).

The protein belongs to the class-II aminoacyl-tRNA synthetase family. Type 2 subfamily. As to quaternary structure, homodimer. It depends on Mg(2+) as a cofactor.

Its subcellular location is the cytoplasm. It catalyses the reaction tRNA(Asx) + L-aspartate + ATP = L-aspartyl-tRNA(Asx) + AMP + diphosphate. Its function is as follows. Aspartyl-tRNA synthetase with relaxed tRNA specificity since it is able to aspartylate not only its cognate tRNA(Asp) but also tRNA(Asn). Reaction proceeds in two steps: L-aspartate is first activated by ATP to form Asp-AMP and then transferred to the acceptor end of tRNA(Asp/Asn). This Sulfurisphaera tokodaii (strain DSM 16993 / JCM 10545 / NBRC 100140 / 7) (Sulfolobus tokodaii) protein is Aspartate--tRNA(Asp/Asn) ligase.